The following is a 379-amino-acid chain: Galactose-1-phosphate uridylyltransferase (379 aa).

Over residues 1-15 (MSQSGADPEQRQQAS) the composition is skewed to polar residues. The disordered stretch occupies residues 1–20 (MSQSGADPEQRQQASEADAM). Residue Cys-75 participates in Zn(2+) binding. Residues Ala-81, 97–98 (ND), and Asn-173 contribute to the UDP-alpha-D-glucose site. His-184 is a Zn(2+) binding site. His-186 (tele-UMP-histidine intermediate) is an active-site residue. Gln-188 contacts UDP-alpha-D-glucose. Zn(2+) contacts are provided by Glu-202, His-301, His-319, and His-321. Residues 334–337 (KFMV) and 339–340 (YE) contribute to the UDP-alpha-D-glucose site.

This sequence belongs to the galactose-1-phosphate uridylyltransferase type 1 family. In terms of assembly, homodimer. The cofactor is Zn(2+).

It catalyses the reaction alpha-D-galactose 1-phosphate + UDP-alpha-D-glucose = alpha-D-glucose 1-phosphate + UDP-alpha-D-galactose. It participates in carbohydrate metabolism; galactose metabolism. Functionally, plays an important role in galactose metabolism. The sequence is that of Galactose-1-phosphate uridylyltransferase (Galt) from Rattus norvegicus (Rat).